The primary structure comprises 309 residues: GTP cyclohydrolase FolE2 (309 aa).

The protein belongs to the GTP cyclohydrolase IV family.

It catalyses the reaction GTP + H2O = 7,8-dihydroneopterin 3'-triphosphate + formate + H(+). The protein operates within cofactor biosynthesis; 7,8-dihydroneopterin triphosphate biosynthesis; 7,8-dihydroneopterin triphosphate from GTP: step 1/1. Converts GTP to 7,8-dihydroneopterin triphosphate. This is GTP cyclohydrolase FolE2 from Serratia proteamaculans (strain 568).